Consider the following 3256-residue polypeptide: Proliferation marker protein Ki-67 (3256 aa).

Positions 27 to 76 constitute an FHA domain; the sequence is CLFGRGIECDIRIQLPVVSKQHCKIEIHEQEAILHNFSSTNPTQVNGSVI. Residues 101 to 199 are disordered; it reads SLQNGRKSTE…RNGRNAADPI (99 aa). Basic and acidic residues predominate over residues 107–122; that stretch reads KSTEFPRKIREQEPAR. Ser-125, Ser-128, and Ser-166 each carry phosphoserine. The span at 161–173 shows a compositional bias: basic and acidic residues; that stretch reads NVKEDSTADDSKD. Positions 174 to 183 are enriched in polar residues; the sequence is SVAQGTTNVH. Lys-245 is covalently cross-linked (Glycyl lysine isopeptide (Lys-Gly) (interchain with G-Cter in SUMO2)). 3 positions are modified to phosphoserine: Ser-264, Ser-296, and Ser-308. Disordered regions lie at residues 271–426 and 513–542; these read ATEK…RGSI and RPEL…LVMH. Over residues 314 to 324 the composition is skewed to basic and acidic residues; that stretch reads DQNKGKGRDVE. A phosphothreonine mark is found at Thr-328 and Thr-347. Positions 349-358 are enriched in polar residues; sequence VQYSQQQNSP. Phosphoserine occurs at positions 352, 357, and 374. Thr-401 bears the Phosphothreonine mark. Ser-411 carries the post-translational modification Phosphoserine. Positions 414–425 are enriched in polar residues; sequence KPENLSSKTRGS. The segment at 495–678 is positively charged patch (CP); that stretch reads ESEGIPLKRR…AKQTQTKVIK (184 aa). The 48-residue stretch at 502–549 folds into the PP1-binding domain; sequence KRRRVSFGGHLRPELFDENLPPNTPLKRGEAPTKRKSLVMHTPPVLKK. The residue at position 538 (Ser-538) is a Phosphoserine. A Phosphothreonine modification is found at Thr-543. The disordered stretch occupies residues 575 to 632; the sequence is SLVISPPAPSPRKTPVASDQRRRSCKTAPASSSKSQTEVPKRGGRKSGNLPSKRVSIS. 2 positions are modified to phosphoserine: Ser-579 and Ser-584. Positions 603 to 612 are enriched in polar residues; sequence PASSSKSQTE. A Phosphoserine modification is found at Ser-648. The disordered stretch occupies residues 674–707; the sequence is TKVIKHGPQRSMNKRQRRPATPKKPVGEVHSQFS. Residues 676-694 show a composition bias toward basic residues; sequence VIKHGPQRSMNKRQRRPAT. Thr-761 bears the Phosphothreonine mark. A disordered region spans residues 853–886; that stretch reads SLETKTSDTETEPSKTVSTANRSGRSTEFRNIQK. At Ser-859 the chain carries Phosphoserine. Over residues 866–882 the composition is skewed to polar residues; it reads SKTVSTANRSGRSTEFR. The 16 X 122 AA approximate repeats stretch occupies residues 1000–2928; that stretch reads GKITKMPCQS…ASFQELSQTP (1929 aa). 6 K167R repeats span residues 1001–1112, 1123–1234, 1245–1356, 1367–1477, 1488–1597, and 1609–1720; these read KITK…FQTP, KTTK…FQTP, KTTK…LFQT, and KTAK…FQTP. Thr-1017 is subject to Phosphothreonine. Residues Lys-1022 and Lys-1035 each participate in a glycyl lysine isopeptide (Lys-Gly) (interchain with G-Cter in SUMO2) cross-link. Positions 1045–1073 are disordered; sequence TRTSGETTHTHREPAGDGKSIRTFKESPK. A compositionally biased stretch (basic and acidic residues) spans 1052–1072; the sequence is THTHREPAGDGKSIRTFKESP. Ser-1071 is subject to Phosphoserine. Thr-1091 carries the post-translational modification Phosphothreonine. Lys-1093 is covalently cross-linked (Glycyl lysine isopeptide (Lys-Gly) (interchain with G-Cter in SUMO1); alternate). A Glycyl lysine isopeptide (Lys-Gly) (interchain with G-Cter in SUMO2); alternate cross-link involves residue Lys-1093. A Phosphoserine modification is found at Ser-1098. The interval 1109 to 1151 is disordered; it reads FQTPGPSEESMTDEKTTKIACKSPPPESVDTPTSTKQWPKRSL. Thr-1111 carries the post-translational modification Phosphothreonine. A Phosphoserine modification is found at Ser-1131. The residue at position 1139 (Thr-1139) is a Phosphothreonine. Ser-1142 is subject to Phosphoserine. Thr-1167 carries the post-translational modification Phosphothreonine. The residue at position 1169 (Ser-1169) is a Phosphoserine. Thr-1176 is modified (phosphothreonine). Residues Lys-1185 and Lys-1188 each participate in a glycyl lysine isopeptide (Lys-Gly) (interchain with G-Cter in SUMO2) cross-link. At Thr-1193 the chain carries Phosphothreonine. Ser-1207 is subject to Phosphoserine. Thr-1233 is subject to Phosphothreonine. The segment at 1246–1276 is disordered; sequence TTKIPCDSPQSDPVDTPTSTKQRPKRSIRKA. Ser-1253 and Ser-1256 each carry phosphoserine. The segment covering 1253 to 1266 has biased composition (polar residues); it reads SPQSDPVDTPTSTK. A phosphothreonine mark is found at Thr-1261, Thr-1298, Thr-1315, and Thr-1327. A disordered region spans residues 1323-1518; sequence TENLTGSKRR…PQSKRSLRKV (196 aa). Ser-1329 is subject to Phosphoserine. Thr-1335 is modified (phosphothreonine). Lys-1337 is covalently cross-linked (Glycyl lysine isopeptide (Lys-Gly) (interchain with G-Cter in SUMO2)). Thr-1355 is modified (phosphothreonine). Ser-1376 carries the phosphoserine modification. Residue Thr-1383 is modified to Phosphothreonine. At Ser-1386 the chain carries Phosphoserine. Composition is skewed to basic and acidic residues over residues 1394-1406 and 1418-1442; these read PLEK…ELSA and THTD…KQKL. Thr-1420 and Thr-1437 each carry phosphothreonine. A Phosphoserine modification is found at Ser-1496. Residue Thr-1503 is modified to Phosphothreonine. Residue Ser-1506 is modified to Phosphoserine. Residue Thr-1540 is modified to Phosphothreonine. Tyr-1552 carries the post-translational modification Phosphotyrosine. Residues Thr-1557 and Thr-1569 each carry the phosphothreonine modification. Residues Ser-1571 and Ser-1617 each carry the phosphoserine modification. The segment at 1597 to 1675 is disordered; the sequence is TRGHTEESMT…PTGDGKSMKA (79 aa). The residue at position 1639 (Lys-1639) is an N6-acetyllysine. A Glycyl lysine isopeptide (Lys-Gly) (interchain with G-Cter in SUMO2) cross-link involves residue Lys-1643. Residues 1660 to 1672 show a composition bias toward basic and acidic residues; the sequence is THTHTEPTGDGKS. 2 positions are modified to phosphoserine: Ser-1679 and Ser-1689. Disordered stretches follow at residues 1689–1708, 1717–1765, 1771–1790, 1801–1824, and 1839–1886; these read SLTG…EVPE, FQTP…ADTE, FRKQ…PAVG, TPVQ…TRKE, and FQTP…KADV. Lys-1703 participates in a covalent cross-link: Glycyl lysine isopeptide (Lys-Gly) (interchain with G-Cter in SUMO2). At Thr-1719 the chain carries Phosphothreonine. A Phosphoserine modification is found at Ser-1721. Over residues 1722–1733 the composition is skewed to basic and acidic residues; that stretch reads HTKESMTNEKTT. 5 K167R repeats span residues 1731 to 1842, 1854 to 1964, 1975 to 2086, 2097 to 2204, and 2215 to 2326; these read KTTK…FQTP, TKKI…FQTP, and KITE…FQTP. Position 1740 is a phosphoserine (Ser-1740). Phosphothreonine occurs at positions 1747, 1764, 1784, and 1801. Residue Ser-1815 is modified to Phosphoserine. Thr-1841 carries the post-translational modification Phosphothreonine. Phosphoserine occurs at positions 1861 and 1864. The span at 1861–1874 shows a compositional bias: polar residues; the sequence is SPQSDPADTPTNTK. Thr-1869, Thr-1897, Thr-1906, and Thr-1923 each carry phosphothreonine. The residue at position 1937 (Ser-1937) is a Phosphoserine. The disordered stretch occupies residues 1961–2002; it reads FQTPGHTEESMTDDKITEVSCKSPQPDPVKTPTSSKQRLKIS. The residue at position 1963 (Thr-1963) is a Phosphothreonine. Over residues 1966 to 1977 the composition is skewed to basic and acidic residues; the sequence is HTEESMTDDKIT. Position 1983 is a phosphoserine (Ser-1983). Lys-2005 carries the post-translational modification N6-acetyllysine. Residue Lys-2009 forms a Glycyl lysine isopeptide (Lys-Gly) (interchain with G-Cter in SUMO1); alternate linkage. A Glycyl lysine isopeptide (Lys-Gly) (interchain with G-Cter in SUMO2); alternate cross-link involves residue Lys-2009. The interval 2017 to 2192 is disordered; it reads KLTQTSGKTT…TPKGKAQPLE (176 aa). Residues Thr-2028 and Thr-2065 each carry the phosphothreonine modification. Composition is skewed to basic and acidic residues over residues 2028–2046 and 2061–2070; these read THRE…KESA and RWPRTPKEEA. Lys-2067 is covalently cross-linked (Glycyl lysine isopeptide (Lys-Gly) (interchain with G-Cter in SUMO1); alternate). Lys-2067 participates in a covalent cross-link: Glycyl lysine isopeptide (Lys-Gly) (interchain with G-Cter in SUMO2); alternate. Residue Ser-2072 is modified to Phosphoserine. At Thr-2085 the chain carries Phosphothreonine. Basic and acidic residues predominate over residues 2087–2099; sequence DHTEESTTDDKTT. At Ser-2105 the chain carries Phosphoserine. At Thr-2113 the chain carries Phosphothreonine. Ser-2116 and Ser-2135 each carry phosphoserine. A compositionally biased stretch (basic and acidic residues) spans 2145–2168; the sequence is HTDKVPGDEDKGINVFRETAKQKL. Phosphothreonine occurs at positions 2146, 2163, and 2203. The interval 2205 to 2400 is disordered; it reads ICTDKPTTHE…KPAVSDEKNI (196 aa). Ser-2223 carries the post-translational modification Phosphoserine. Residues Thr-2231 and Thr-2233 each carry the phosphothreonine modification. Ser-2239 carries the phosphoserine modification. Phosphothreonine is present on Thr-2259. Ser-2261 is modified (phosphoserine). A phosphothreonine mark is found at Thr-2268, Thr-2285, Thr-2325, Thr-2328, and Thr-2333. 5 K167R repeats span residues 2336–2447, 2458–2569, 2580–2688, 2700–2805, and 2819–2928; these read KTTK…FQTP, KITE…FSAP, KNTK…LSET, KATK…GFKD, and KTTK…SQTP. The residue at position 2344 (Ser-2344) is a Phosphoserine. 2 positions are modified to phosphothreonine: Thr-2352 and Thr-2389. Ser-2395 carries the phosphoserine modification. Thr-2406 carries the post-translational modification Phosphothreonine. The residue at position 2420 (Ser-2420) is a Phosphoserine. Residues Thr-2426 and Thr-2446 each carry the phosphothreonine modification. A disordered region spans residues 2445 to 2480; the sequence is QTPGHTEESMTDDKITEVSCKSPQPESFKTSRSSKQ. A compositionally biased stretch (basic and acidic residues) spans 2449 to 2460; that stretch reads HTEESMTDDKIT. A compositionally biased stretch (polar residues) spans 2463 to 2475; sequence SCKSPQPESFKTS. Ser-2466 carries the post-translational modification Phosphoserine. Lys-2492 participates in a covalent cross-link: Glycyl lysine isopeptide (Lys-Gly) (interchain with G-Cter in SUMO1). The segment at 2497–2521 is disordered; that stretch reads AVSKLTRTSGETTQTHTEPTGDSKS. A compositionally biased stretch (polar residues) spans 2501–2514; sequence LTRTSGETTQTHTE. Phosphoserine occurs at positions 2505, 2528, and 2588. Positions 2570–3256 are disordered; it reads GHTEESMTID…TRSHRDSEDI (687 aa). Composition is skewed to basic and acidic residues over residues 2609 to 2618, 2632 to 2644, and 2660 to 2675; these read RKEVKEELSA, THKE…EGIK, and EPSR…KAQP. Lys-2613 participates in a covalent cross-link: Glycyl lysine isopeptide (Lys-Gly) (interchain with G-Cter in SUMO1); alternate. Lys-2613 is covalently cross-linked (Glycyl lysine isopeptide (Lys-Gly) (interchain with G-Cter in SUMO2); alternate). The residue at position 2638 (Ser-2638) is a Phosphoserine. The segment covering 2685-2696 has biased composition (polar residues); sequence LSETSGHTQESL. The residue at position 2708 (Ser-2708) is a Phosphoserine. Residue Lys-2734 forms a Glycyl lysine isopeptide (Lys-Gly) (interchain with G-Cter in SUMO1); alternate linkage. A Glycyl lysine isopeptide (Lys-Gly) (interchain with G-Cter in SUMO2); alternate cross-link involves residue Lys-2734. 2 stretches are compositionally biased toward basic and acidic residues: residues 2751 to 2770 and 2810 to 2821; these read DADK…KESA and HTEESMTDDKTT. A phosphoserine mark is found at Ser-2827, Ser-2828, and Ser-2838. Lys-2852 participates in a covalent cross-link: Glycyl lysine isopeptide (Lys-Gly) (interchain with G-Cter in SUMO1); alternate. A Glycyl lysine isopeptide (Lys-Gly) (interchain with G-Cter in SUMO2); alternate cross-link involves residue Lys-2852. Residues 2869–2881 are compositionally biased toward basic and acidic residues; it reads THTDKEPVGEGKG. Polar residues predominate over residues 2941 to 2951; it reads SFTSAPKQTPD. Residue Lys-2967 forms a Glycyl lysine isopeptide (Lys-Gly) (interchain with G-Cter in SUMO2) linkage. The span at 2982–2991 shows a compositional bias: polar residues; it reads KSQSKSNTSL. N6-acetyllysine is present on Lys-2986. The segment covering 3029–3039 has biased composition (basic residues); sequence KKQRVAPRARG. 3034-3041 is a binding site for ATP; it reads APRARGKS. Ser-3041 is subject to Phosphoserine. Basic and acidic residues-rich tracts occupy residues 3071-3080 and 3113-3124; these read KTNKEEHKLQ and ERIEINRNEKKP. Ser-3128 bears the Phosphoserine mark. A compositionally biased stretch (basic and acidic residues) spans 3138-3154; the sequence is DGARKPIPRDKVTENKR. Positions 3207 to 3223 are enriched in polar residues; that stretch reads SQPAASTLESKSVQRVT. Over residues 3228 to 3241 the composition is skewed to basic and acidic residues; the sequence is RCAENPKKAEDNVC.

Interacts with KIF15. Interacts (via the FHA domain) with NIFK. Interacts with PPP1CC. Component of a complex at least composed of ZNF335, HCFC1, CCAR2, EMSY, MKI67, RBBP5, ASH2L and WDR5; the complex is formed as a result of interactions between components of a nuclear receptor-mediated transcription complex and a histone methylation complex. Interacts with ZNF335. In terms of processing, hyperphosphorylated by CDK1 in mitosis; hyperphosphorylatiom prevents undergoing liquid-liquid phase separation. Dephosphorylated by PPP1CC at the onset of anaphase. Dephosphorylated by protein phosphatase 2A (PP2A) at the onset of anaphase. Dephosphorylation by protein phosphatase 2A (PP2A) and simultaneous exposure of the positively charged patch (CP) during mitotic exit induce the RNA-dependent formation of a liquid-like condensed phase on the chromosome surface. Post-translationally, ubiquitinated by the APC/C complex after neuronal progenitors exit mitosis during brain development, leading to clearance from constitutive heterochromatin.

The protein localises to the chromosome. Its subcellular location is the nucleus. It localises to the nucleolus. Functionally, protein that associates with the surface of mitotic chromosomes and acts both as a chromosome repellent during early mitosis and chromosome attractant during late mitosis. Required to maintain individual mitotic chromosomes dispersed in the cytoplasm following nuclear envelope disassembly. During early mitosis, relocalizes from nucleoli to the chromosome surface where it forms extended brush structures that cover a substantial fraction of the chromosome surface. The MKI67 brush structure prevents chromosomes from collapsing into a single chromatin mass by forming a steric and electrostatic charge barrier: the protein has a high net electrical charge and acts as a surfactant, dispersing chromosomes and enabling independent chromosome motility. During mitotic anaphase, the MKI67 brush structure collapses and MKI67 switches from a chromosome repellent to a chromosome attractant to promote chromosome clustering and facilitate the exclusion of large cytoplasmic particles from the future nuclear space. Mechanistically, dephosphorylation during mitotic exit and simultaneous exposure of a conserved basic patch induce the RNA-dependent formation of a liquid-like condensed phase on the chromosome surface, promoting coalescence of neighboring chromosome surfaces and clustering of chromosomes. Binds premature ribosomal RNAs during anaphase; promoting liquid-liquid phase separation. Binds DNA, with a preference for supercoiled DNA and AT-rich DNA. Does not contribute to the internal structure of mitotic chromosomes. May play a role in chromatin organization; it is however unclear whether it plays a direct role in chromatin organization or whether it is an indirect consequence of its function in mitotic chromosome. The protein is Proliferation marker protein Ki-67 of Homo sapiens (Human).